A 480-amino-acid polypeptide reads, in one-letter code: Protein nucleotidyltransferase YdiU (480 aa).

Residues Gly86, Gly88, Arg89, Lys109, Asp121, Gly122, Arg172, and Arg179 each contribute to the ATP site. Residue Asp248 is the Proton acceptor of the active site. Mg(2+) contacts are provided by Asn249 and Asp258. Asp258 serves as a coordination point for ATP.

The protein belongs to the SELO family. Mg(2+) serves as cofactor. It depends on Mn(2+) as a cofactor.

The enzyme catalyses L-seryl-[protein] + ATP = 3-O-(5'-adenylyl)-L-seryl-[protein] + diphosphate. It catalyses the reaction L-threonyl-[protein] + ATP = 3-O-(5'-adenylyl)-L-threonyl-[protein] + diphosphate. It carries out the reaction L-tyrosyl-[protein] + ATP = O-(5'-adenylyl)-L-tyrosyl-[protein] + diphosphate. The catalysed reaction is L-histidyl-[protein] + UTP = N(tele)-(5'-uridylyl)-L-histidyl-[protein] + diphosphate. The enzyme catalyses L-seryl-[protein] + UTP = O-(5'-uridylyl)-L-seryl-[protein] + diphosphate. It catalyses the reaction L-tyrosyl-[protein] + UTP = O-(5'-uridylyl)-L-tyrosyl-[protein] + diphosphate. In terms of biological role, nucleotidyltransferase involved in the post-translational modification of proteins. It can catalyze the addition of adenosine monophosphate (AMP) or uridine monophosphate (UMP) to a protein, resulting in modifications known as AMPylation and UMPylation. The chain is Protein nucleotidyltransferase YdiU from Salmonella enteritidis PT4 (strain P125109).